A 606-amino-acid polypeptide reads, in one-letter code: NADH-ubiquinone oxidoreductase chain 5 (606 aa).

The next 16 membrane-spanning stretches (helical) occupy residues 4 to 24, 38 to 58, 87 to 107, 117 to 137, 140 to 160, 171 to 191, 211 to 233, 241 to 261, 273 to 293, 301 to 320, 325 to 347, 366 to 386, 413 to 433, 457 to 477, 488 to 508, and 584 to 604; these read FSSLMLASLSVLTLPIMSSIL, NIISYAFITSLIPTMMFIHSG, MIFVPVALFVTWSIMEFSLWY, FFKYLLTFLITMMILVTANNL, LFIGWEGVGIMSFLLIGWWYG, AILYNRIGDIGFIMAMAWFLF, LPLLGLLLAATGKSAQFGLHPWL, TPVSALLHSSTMVVAGVFLLI, IQSLTLCLGAITTLFTAICAL, IIAFSTSSQLGLMIVTIGIN, AFLHICTHAFFKAMLFMCSGSII, MPFTTTSLIIGSLALTGMPFL, LIATSLTAVYSTRIIFFALLG, LLIGSIFAGFFISNNIYPTTI, LTALTVTILGFTLALELSLIT, and IKLYFLSFLITLTLSMLLFNL.

It belongs to the complex I subunit 5 family. In terms of assembly, core subunit of respiratory chain NADH dehydrogenase (Complex I) which is composed of 45 different subunits.

It is found in the mitochondrion inner membrane. The enzyme catalyses a ubiquinone + NADH + 5 H(+)(in) = a ubiquinol + NAD(+) + 4 H(+)(out). Core subunit of the mitochondrial membrane respiratory chain NADH dehydrogenase (Complex I) which catalyzes electron transfer from NADH through the respiratory chain, using ubiquinone as an electron acceptor. Essential for the catalytic activity and assembly of complex I. This chain is NADH-ubiquinone oxidoreductase chain 5 (MT-ND5), found in Equus asinus (Donkey).